Reading from the N-terminus, the 233-residue chain is Pyridoxal phosphate homeostasis protein (233 aa).

The residue at position 35 (lysine 35) is an N6-(pyridoxal phosphate)lysine.

The protein belongs to the pyridoxal phosphate-binding protein YggS/PROSC family.

In terms of biological role, pyridoxal 5'-phosphate (PLP)-binding protein, which is involved in PLP homeostasis. This is Pyridoxal phosphate homeostasis protein from Pasteurella multocida (strain Pm70).